Here is a 176-residue protein sequence, read N- to C-terminus: RING-H2 finger protein ATL73 (176 aa).

Residues 1–16 (MARFLLATQATPTISA) form the signal peptide. The helical transmembrane segment at 42-62 (VIILAALLCALICALGINSVL) threads the bilayer. An RING-type; atypical zinc finger spans residues 113–155 (CLICLGDFVEGETVRVLPKCNHGFHVKCIDTWLLSHSSCPTCR).

Belongs to the RING-type zinc finger family. ATL subfamily.

Its subcellular location is the membrane. The enzyme catalyses S-ubiquitinyl-[E2 ubiquitin-conjugating enzyme]-L-cysteine + [acceptor protein]-L-lysine = [E2 ubiquitin-conjugating enzyme]-L-cysteine + N(6)-ubiquitinyl-[acceptor protein]-L-lysine.. The protein operates within protein modification; protein ubiquitination. The polypeptide is RING-H2 finger protein ATL73 (ATL73) (Arabidopsis thaliana (Mouse-ear cress)).